Reading from the N-terminus, the 230-residue chain is PKHD-type hydroxylase Xfasm12_1709 (230 aa).

Residues 78 to 182 (RTLPPRFNRY…RIASFFWVQS (105 aa)) form the Fe2OG dioxygenase domain. The Fe cation site is built by His-96, Asp-98, and His-163. Arg-173 contacts 2-oxoglutarate.

Fe(2+) is required as a cofactor. L-ascorbate serves as cofactor.

This is PKHD-type hydroxylase Xfasm12_1709 from Xylella fastidiosa (strain M12).